We begin with the raw amino-acid sequence, 301 residues long: tRNA dimethylallyltransferase 2 (301 aa).

11–18 (GATASGKT) lines the ATP pocket. 13-18 (TASGKT) lines the substrate pocket. An interaction with substrate tRNA region spans residues 36–39 (DSRQ).

The protein belongs to the IPP transferase family. As to quaternary structure, monomer. Mg(2+) serves as cofactor.

The catalysed reaction is adenosine(37) in tRNA + dimethylallyl diphosphate = N(6)-dimethylallyladenosine(37) in tRNA + diphosphate. Catalyzes the transfer of a dimethylallyl group onto the adenine at position 37 in tRNAs that read codons beginning with uridine, leading to the formation of N6-(dimethylallyl)adenosine (i(6)A). The protein is tRNA dimethylallyltransferase 2 of Shewanella sediminis (strain HAW-EB3).